We begin with the raw amino-acid sequence, 318 residues long: Receptor homology region, transmembrane domain- and RING domain-containing protein 5 (318 aa).

The signal sequence occupies residues methionine 1–alanine 20. The Lumenal portion of the chain corresponds to valine 22–serine 163. A disulfide bridge links cysteine 62 with cysteine 87. Residues glutamate 70–tyrosine 143 form the PA domain. The N-linked (GlcNAc...) asparagine glycan is linked to asparagine 121. The helical transmembrane segment at isoleucine 164 to valine 184 threads the bilayer. Over valine 185 to leucine 318 the chain is Cytoplasmic. The RING-type; atypical zinc-finger motif lies at cysteine 233 to lysine 275.

It localises to the prevacuolar compartment membrane. Its subcellular location is the protein storage vacuole membrane. Involved in the trafficking of vacuolar proteins. May function as a sorting receptor for protein trafficking to the protein storage vacuole (PSV). This Arabidopsis thaliana (Mouse-ear cress) protein is Receptor homology region, transmembrane domain- and RING domain-containing protein 5 (RMR5).